Here is a 64-residue protein sequence, read N- to C-terminus: Large ribosomal subunit protein uL29 (64 aa).

Belongs to the universal ribosomal protein uL29 family.

This chain is Large ribosomal subunit protein uL29, found in Synechococcus elongatus (strain ATCC 33912 / PCC 7942 / FACHB-805) (Anacystis nidulans R2).